The sequence spans 371 residues: Aspartate-semialdehyde dehydrogenase (371 aa).

Residues 11–14 (RGMV), 38–39 (TS), and Gln-75 each bind NADP(+). Arg-104 serves as a coordination point for phosphate. The active-site Acyl-thioester intermediate is the Cys-137. Substrate is bound at residue Gln-164. 167–168 (SG) contributes to the NADP(+) binding site. A substrate-binding site is contributed by Glu-243. Residue Lys-246 participates in phosphate binding. Arg-269 serves as a coordination point for substrate. The Proton acceptor role is filled by His-276. Gln-352 serves as a coordination point for NADP(+).

The protein belongs to the aspartate-semialdehyde dehydrogenase family. In terms of assembly, homodimer.

The enzyme catalyses L-aspartate 4-semialdehyde + phosphate + NADP(+) = 4-phospho-L-aspartate + NADPH + H(+). Its pathway is amino-acid biosynthesis; L-lysine biosynthesis via DAP pathway; (S)-tetrahydrodipicolinate from L-aspartate: step 2/4. The protein operates within amino-acid biosynthesis; L-methionine biosynthesis via de novo pathway; L-homoserine from L-aspartate: step 2/3. It functions in the pathway amino-acid biosynthesis; L-threonine biosynthesis; L-threonine from L-aspartate: step 2/5. Catalyzes the NADPH-dependent formation of L-aspartate-semialdehyde (L-ASA) by the reductive dephosphorylation of L-aspartyl-4-phosphate. This is Aspartate-semialdehyde dehydrogenase from Buchnera aphidicola subsp. Acyrthosiphon pisum (strain APS) (Acyrthosiphon pisum symbiotic bacterium).